Reading from the N-terminus, the 475-residue chain is Methylenetetrahydrofolate--tRNA-(uracil-5-)-methyltransferase TrmFO (475 aa).

9–14 (GGGLAG) is an FAD binding site. Residues 427–447 (APRNETGRRLRGPEKAALKKR) are disordered.

It belongs to the MnmG family. TrmFO subfamily. It depends on FAD as a cofactor.

The protein resides in the cytoplasm. It carries out the reaction uridine(54) in tRNA + (6R)-5,10-methylene-5,6,7,8-tetrahydrofolate + NADH + H(+) = 5-methyluridine(54) in tRNA + (6S)-5,6,7,8-tetrahydrofolate + NAD(+). The catalysed reaction is uridine(54) in tRNA + (6R)-5,10-methylene-5,6,7,8-tetrahydrofolate + NADPH + H(+) = 5-methyluridine(54) in tRNA + (6S)-5,6,7,8-tetrahydrofolate + NADP(+). In terms of biological role, catalyzes the folate-dependent formation of 5-methyl-uridine at position 54 (M-5-U54) in all tRNAs. The polypeptide is Methylenetetrahydrofolate--tRNA-(uracil-5-)-methyltransferase TrmFO (Methylobacterium radiotolerans (strain ATCC 27329 / DSM 1819 / JCM 2831 / NBRC 15690 / NCIMB 10815 / 0-1)).